Consider the following 34-residue polypeptide: Mu-conotoxin GS (34 aa).

3 disulfide bridges follow: Cys-2/Cys-14, Cys-9/Cys-19, and Cys-13/Cys-27. Residues Pro-10 and Pro-11 each carry the 4-hydroxyproline modification. Glu-32 is subject to 4-carboxyglutamate.

Expressed by the venom duct.

Its subcellular location is the secreted. Its function is as follows. Mu-conotoxins block voltage-gated sodium channels (Nav). No effect was observed upon injections into mice and goldfish (25 ug). In Conus geographus (Geography cone), this protein is Mu-conotoxin GS.